Consider the following 428-residue polypeptide: Cytochrome c biogenesis protein CcsB (428 aa).

3 helical membrane passes run 14 to 34 (LKFA…GTFI), 72 to 92 (SLWF…CSFR), and 162 to 182 (IGPL…AYGS).

This sequence belongs to the Ccs1/CcsB family. In terms of assembly, may interact with CcsA.

It is found in the cellular thylakoid membrane. Functionally, required during biogenesis of c-type cytochromes (cytochrome c6 and cytochrome f) at the step of heme attachment. The polypeptide is Cytochrome c biogenesis protein CcsB (Prochlorococcus marinus (strain MIT 9301)).